The following is a 254-amino-acid chain: 3-deoxy-manno-octulosonate cytidylyltransferase (254 aa).

Belongs to the KdsB family.

The protein resides in the cytoplasm. It carries out the reaction 3-deoxy-alpha-D-manno-oct-2-ulosonate + CTP = CMP-3-deoxy-beta-D-manno-octulosonate + diphosphate. It functions in the pathway nucleotide-sugar biosynthesis; CMP-3-deoxy-D-manno-octulosonate biosynthesis; CMP-3-deoxy-D-manno-octulosonate from 3-deoxy-D-manno-octulosonate and CTP: step 1/1. Its pathway is bacterial outer membrane biogenesis; lipopolysaccharide biosynthesis. In terms of biological role, activates KDO (a required 8-carbon sugar) for incorporation into bacterial lipopolysaccharide in Gram-negative bacteria. The chain is 3-deoxy-manno-octulosonate cytidylyltransferase from Pseudomonas fluorescens (strain ATCC BAA-477 / NRRL B-23932 / Pf-5).